Here is a 320-residue protein sequence, read N- to C-terminus: UV DNA damage endonuclease (320 aa).

It belongs to the uve1/UvsE family.

Its function is as follows. Component in a DNA repair pathway. Removal of UV LIGHT damaged nucleotides. Recognizes pyrimidine dimers and cleave a phosphodiester bond immediately 5' to the lesion. The chain is UV DNA damage endonuclease from Bacillus pumilus (strain SAFR-032).